Consider the following 269-residue polypeptide: MKPLNILISNDDGVFAAGIRALAKSAQKRGHKVKVVCPDQERSATGHGLTLQSPLRVEKADELFGEGIEAWGCSGTPADCVKLALSELLDNKPDLILSGINHGPNLGTDIFCSGTVAAAMEGTLENVPSMAISVASFKWKNFEAAGEIAMNIAEQAINDSWPASLLLNLNIPPCDKSKIKELSWTRLSVRKYKNQFSKREDPRGDDYYWLAGEVVLDLKSKGYGPKNWPSDVSQIQDNKISLTPVEPDLFWRGDLENLPKINNSFINPS.

Positions 11, 12, 43, and 101 each coordinate a divalent metal cation.

The protein belongs to the SurE nucleotidase family. Requires a divalent metal cation as cofactor.

It localises to the cytoplasm. The catalysed reaction is a ribonucleoside 5'-phosphate + H2O = a ribonucleoside + phosphate. Functionally, nucleotidase that shows phosphatase activity on nucleoside 5'-monophosphates. This chain is 5'-nucleotidase SurE, found in Prochlorococcus marinus (strain AS9601).